Reading from the N-terminus, the 273-residue chain is Dermonecrotic toxin LdSicTox-alphaIB1bi (273 aa).

The active site involves H5. The Mg(2+) site is built by E25 and D27. H41 (nucleophile) is an active-site residue. Cystine bridges form between C45–C51 and C47–C190. D85 is a binding site for Mg(2+). N250 is a glycosylation site (N-linked (GlcNAc...) asparagine).

This sequence belongs to the arthropod phospholipase D family. Class II subfamily. It depends on Mg(2+) as a cofactor. As to expression, expressed by the venom gland.

Its subcellular location is the secreted. The catalysed reaction is an N-(acyl)-sphingosylphosphocholine = an N-(acyl)-sphingosyl-1,3-cyclic phosphate + choline. The enzyme catalyses an N-(acyl)-sphingosylphosphoethanolamine = an N-(acyl)-sphingosyl-1,3-cyclic phosphate + ethanolamine. It carries out the reaction a 1-acyl-sn-glycero-3-phosphocholine = a 1-acyl-sn-glycero-2,3-cyclic phosphate + choline. It catalyses the reaction a 1-acyl-sn-glycero-3-phosphoethanolamine = a 1-acyl-sn-glycero-2,3-cyclic phosphate + ethanolamine. In terms of biological role, dermonecrotic toxins cleave the phosphodiester linkage between the phosphate and headgroup of certain phospholipids (sphingolipid and lysolipid substrates), forming an alcohol (often choline) and a cyclic phosphate. This toxin acts on sphingomyelin (SM). It may also act on ceramide phosphoethanolamine (CPE), lysophosphatidylcholine (LPC) and lysophosphatidylethanolamine (LPE), but not on lysophosphatidylserine (LPS), and lysophosphatidylglycerol (LPG). It acts by transphosphatidylation, releasing exclusively cyclic phosphate products as second products. Induces dermonecrosis, hemolysis, increased vascular permeability, edema, inflammatory response, and platelet aggregation. In Loxosceles deserta (Desert recluse spider), this protein is Dermonecrotic toxin LdSicTox-alphaIB1bi.